Reading from the N-terminus, the 397-residue chain is Acetate kinase 2 (397 aa).

Residue asparagine 10 coordinates Mg(2+). An ATP-binding site is contributed by lysine 17. A substrate-binding site is contributed by arginine 90. Residue aspartate 147 is the Proton donor/acceptor of the active site. Residues 207 to 211 (HLGNG), 281 to 283 (DAR), and 329 to 333 (GIGEN) each bind ATP. Mg(2+) is bound at residue glutamate 385.

Belongs to the acetokinase family. In terms of assembly, homodimer. Mg(2+) is required as a cofactor. It depends on Mn(2+) as a cofactor.

Its subcellular location is the cytoplasm. The enzyme catalyses acetate + ATP = acetyl phosphate + ADP. The protein operates within metabolic intermediate biosynthesis; acetyl-CoA biosynthesis; acetyl-CoA from acetate: step 1/2. Its function is as follows. Catalyzes the formation of acetyl phosphate from acetate and ATP. Can also catalyze the reverse reaction. The sequence is that of Acetate kinase 2 from Vibrio parahaemolyticus serotype O3:K6 (strain RIMD 2210633).